The sequence spans 234 residues: Large ribosomal subunit protein bL25 (234 aa).

This sequence belongs to the bacterial ribosomal protein bL25 family. CTC subfamily. In terms of assembly, part of the 50S ribosomal subunit; part of the 5S rRNA/L5/L18/L25 subcomplex. Contacts the 5S rRNA. Binds to the 5S rRNA independently of L5 and L18.

In terms of biological role, this is one of the proteins that binds to the 5S RNA in the ribosome where it forms part of the central protuberance. This Rhodopseudomonas palustris (strain BisA53) protein is Large ribosomal subunit protein bL25.